A 238-amino-acid chain; its full sequence is Ubiquinone biosynthesis O-methyltransferase (238 aa).

Residues Arg40, Gly59, Asp80, and Met125 each contribute to the S-adenosyl-L-methionine site.

Belongs to the methyltransferase superfamily. UbiG/COQ3 family.

The enzyme catalyses a 3-demethylubiquinol + S-adenosyl-L-methionine = a ubiquinol + S-adenosyl-L-homocysteine + H(+). It carries out the reaction a 3-(all-trans-polyprenyl)benzene-1,2-diol + S-adenosyl-L-methionine = a 2-methoxy-6-(all-trans-polyprenyl)phenol + S-adenosyl-L-homocysteine + H(+). The protein operates within cofactor biosynthesis; ubiquinone biosynthesis. In terms of biological role, O-methyltransferase that catalyzes the 2 O-methylation steps in the ubiquinone biosynthetic pathway. The sequence is that of Ubiquinone biosynthesis O-methyltransferase from Paracidovorax citrulli (strain AAC00-1) (Acidovorax citrulli).